A 319-amino-acid chain; its full sequence is Acetyl esterase (319 aa).

The Involved in the stabilization of the negatively charged intermediate by the formation of the oxyanion hole motif lies at 91–93 (HGG). Catalysis depends on residues Ser165, Asp262, and His292.

The protein belongs to the 'GDXG' lipolytic enzyme family. As to quaternary structure, homodimer. Interacts with MalT and MelA.

It is found in the cytoplasm. Its function is as follows. Displays esterase activity towards short chain fatty esters (acyl chain length of up to 8 carbons). Able to hydrolyze triacetylglycerol (triacetin) and tributyrylglycerol (tributyrin), but not trioleylglycerol (triolein) or cholesterol oleate. Negatively regulates MalT activity by antagonizing maltotriose binding. Inhibits MelA galactosidase activity. The chain is Acetyl esterase from Escherichia coli O6:H1 (strain CFT073 / ATCC 700928 / UPEC).